Consider the following 331-residue polypeptide: MLNWTAGFLVLIAKLTIVLAVLLLVAAYLVWLERKFLARLQIRYGPNRAGKFGLLQPIADIVKMVAKEDTVPEGAERTIFMLAPAVVAATALLVFAVIPFGKDVTLWGMKIPLVVADLNVGLLYFFALSSLGVYGVALGGWASNSKYSLLGGIRGAAQMISYELSLGLAIVPVVMQARSFSLVDIVQAQEKYPFILTQPVAFAIFVISAMAEIKRIPFDLPEAENELGAGFHTEYSGMRFGLFFLGEYVNMQVLGGLVAVLFLGGWHGPLLPPVVWLFIKIVLVALIMIWVRGTLPRLRYDQLMALGWKVLIPLALVNIMVTGAWVLWMGK.

8 consecutive transmembrane segments (helical) span residues 6 to 26 (AGFL…LLVA), 79 to 99 (IFML…AVIP), 120 to 140 (VGLL…ALGG), 155 to 175 (GAAQ…PVVM), 193 to 213 (PFIL…MAEI), 242 to 262 (LFFL…AVLF), 271 to 291 (LPPV…MIWV), and 310 to 330 (VLIP…LWMG).

The protein belongs to the complex I subunit 1 family. NDH-1 is composed of 14 different subunits. Subunits NuoA, H, J, K, L, M, N constitute the membrane sector of the complex.

Its subcellular location is the cell inner membrane. It carries out the reaction a quinone + NADH + 5 H(+)(in) = a quinol + NAD(+) + 4 H(+)(out). Functionally, NDH-1 shuttles electrons from NADH, via FMN and iron-sulfur (Fe-S) centers, to quinones in the respiratory chain. The immediate electron acceptor for the enzyme in this species is believed to be ubiquinone. Couples the redox reaction to proton translocation (for every two electrons transferred, four hydrogen ions are translocated across the cytoplasmic membrane), and thus conserves the redox energy in a proton gradient. This subunit may bind ubiquinone. The protein is NADH-quinone oxidoreductase subunit H 2 of Syntrophobacter fumaroxidans (strain DSM 10017 / MPOB).